A 421-amino-acid polypeptide reads, in one-letter code: Ankyrin repeat domain-containing protein 61 (421 aa).

ANK repeat units lie at residues 27–57 (TLHS…NQPL), 74–103 (QPIF…DPEV), 107–146 (QGFT…NAVL), 166–195 (NKHS…QVNA), 199–228 (SSMT…NVNC), 233–272 (TGNT…QVNA), 276–305 (EGQT…NVNI), and 309–342 (NGES…PLRL).

The protein is Ankyrin repeat domain-containing protein 61 (Ankrd61) of Mus musculus (Mouse).